Here is a 102-residue protein sequence, read N- to C-terminus: Small ribosomal subunit protein uS10 (102 aa).

It belongs to the universal ribosomal protein uS10 family. As to quaternary structure, part of the 30S ribosomal subunit.

Functionally, involved in the binding of tRNA to the ribosomes. This Streptococcus pyogenes serotype M3 (strain SSI-1) protein is Small ribosomal subunit protein uS10.